Consider the following 251-residue polypeptide: Triosephosphate isomerase (251 aa).

9 to 11 contacts substrate; that stretch reads NWK. His-94 serves as the catalytic Electrophile. The Proton acceptor role is filled by Glu-163. Substrate-binding positions include Gly-169, Ser-209, and 230–231; that span reads GG.

It belongs to the triosephosphate isomerase family. In terms of assembly, homodimer.

It localises to the cytoplasm. It catalyses the reaction D-glyceraldehyde 3-phosphate = dihydroxyacetone phosphate. Its pathway is carbohydrate biosynthesis; gluconeogenesis. It participates in carbohydrate degradation; glycolysis; D-glyceraldehyde 3-phosphate from glycerone phosphate: step 1/1. Functionally, involved in the gluconeogenesis. Catalyzes stereospecifically the conversion of dihydroxyacetone phosphate (DHAP) to D-glyceraldehyde-3-phosphate (G3P). The polypeptide is Triosephosphate isomerase (Dehalococcoides mccartyi (strain ATCC BAA-2266 / KCTC 15142 / 195) (Dehalococcoides ethenogenes (strain 195))).